The following is a 506-amino-acid chain: Maturase K (506 aa).

It belongs to the intron maturase 2 family. MatK subfamily.

The protein localises to the plastid. The protein resides in the chloroplast. Its function is as follows. Usually encoded in the trnK tRNA gene intron. Probably assists in splicing its own and other chloroplast group II introns. This is Maturase K from Trifolium hybridum (Alsike clover).